Consider the following 227-residue polypeptide: Cytochrome c oxidase subunit 2 (227 aa).

Residues methionine 1–serine 14 are Mitochondrial intermembrane-facing. The chain crosses the membrane as a helical span at residues proline 15–threonine 45. At leucine 46–glutamine 59 the chain is on the mitochondrial matrix side. A helical membrane pass occupies residues glutamate 60–threonine 87. Over aspartate 88–leucine 227 the chain is Mitochondrial intermembrane. 6 residues coordinate Cu cation: histidine 161, cysteine 196, glutamate 198, cysteine 200, histidine 204, and methionine 207. Residue glutamate 198 participates in Mg(2+) binding.

The protein belongs to the cytochrome c oxidase subunit 2 family. In terms of assembly, component of the cytochrome c oxidase (complex IV, CIV), a multisubunit enzyme composed of 14 subunits. The complex is composed of a catalytic core of 3 subunits MT-CO1, MT-CO2 and MT-CO3, encoded in the mitochondrial DNA, and 11 supernumerary subunits COX4I, COX5A, COX5B, COX6A, COX6B, COX6C, COX7A, COX7B, COX7C, COX8 and NDUFA4, which are encoded in the nuclear genome. The complex exists as a monomer or a dimer and forms supercomplexes (SCs) in the inner mitochondrial membrane with NADH-ubiquinone oxidoreductase (complex I, CI) and ubiquinol-cytochrome c oxidoreductase (cytochrome b-c1 complex, complex III, CIII), resulting in different assemblies (supercomplex SCI(1)III(2)IV(1) and megacomplex MCI(2)III(2)IV(2)). Found in a complex with TMEM177, COA6, COX18, COX20, SCO1 and SCO2. Interacts with TMEM177 in a COX20-dependent manner. Interacts with COX20. Interacts with COX16. Cu cation serves as cofactor.

Its subcellular location is the mitochondrion inner membrane. It catalyses the reaction 4 Fe(II)-[cytochrome c] + O2 + 8 H(+)(in) = 4 Fe(III)-[cytochrome c] + 2 H2O + 4 H(+)(out). Its function is as follows. Component of the cytochrome c oxidase, the last enzyme in the mitochondrial electron transport chain which drives oxidative phosphorylation. The respiratory chain contains 3 multisubunit complexes succinate dehydrogenase (complex II, CII), ubiquinol-cytochrome c oxidoreductase (cytochrome b-c1 complex, complex III, CIII) and cytochrome c oxidase (complex IV, CIV), that cooperate to transfer electrons derived from NADH and succinate to molecular oxygen, creating an electrochemical gradient over the inner membrane that drives transmembrane transport and the ATP synthase. Cytochrome c oxidase is the component of the respiratory chain that catalyzes the reduction of oxygen to water. Electrons originating from reduced cytochrome c in the intermembrane space (IMS) are transferred via the dinuclear copper A center (CU(A)) of subunit 2 and heme A of subunit 1 to the active site in subunit 1, a binuclear center (BNC) formed by heme A3 and copper B (CU(B)). The BNC reduces molecular oxygen to 2 water molecules using 4 electrons from cytochrome c in the IMS and 4 protons from the mitochondrial matrix. The polypeptide is Cytochrome c oxidase subunit 2 (MT-CO2) (Pan troglodytes (Chimpanzee)).